Here is a 206-residue protein sequence, read N- to C-terminus: Small ribosomal subunit protein uS4 (206 aa).

The segment at 15–46 is disordered; it reads MGENIWGRPKSPVNKREYGPGQHGQRRKNKLS. An S4 RNA-binding domain is found at 94 to 154; the sequence is RRLDAIVYRA…EKSRQLALVL (61 aa).

The protein belongs to the universal ribosomal protein uS4 family. In terms of assembly, part of the 30S ribosomal subunit. Contacts protein S5. The interaction surface between S4 and S5 is involved in control of translational fidelity.

Functionally, one of the primary rRNA binding proteins, it binds directly to 16S rRNA where it nucleates assembly of the body of the 30S subunit. Its function is as follows. With S5 and S12 plays an important role in translational accuracy. This chain is Small ribosomal subunit protein uS4, found in Cereibacter sphaeroides (strain ATCC 17029 / ATH 2.4.9) (Rhodobacter sphaeroides).